Here is a 218-residue protein sequence, read N- to C-terminus: Protein-methionine-sulfoxide reductase heme-binding subunit MsrQ (218 aa).

5 helical membrane-spanning segments follow: residues 14 to 34, 60 to 80, 86 to 106, 121 to 141, and 155 to 175; these read AVHAAVLAPIALLGWQFWQVW, LLLITLAITPLRQLTGQAVLI, LGLYAFFYASVHLTAYLWLDL, PYITVGFTAWLLLVPLAITST, and LHMLIYPIGLLAVLHFWWLVK.

The protein belongs to the MsrQ family. In terms of assembly, heterodimer of a catalytic subunit (MsrP) and a heme-binding subunit (MsrQ). Requires FMN as cofactor. Heme b is required as a cofactor.

The protein resides in the cell inner membrane. Part of the MsrPQ system that repairs oxidized periplasmic proteins containing methionine sulfoxide residues (Met-O), using respiratory chain electrons. Thus protects these proteins from oxidative-stress damage caused by reactive species of oxygen and chlorine generated by the host defense mechanisms. MsrPQ is essential for the maintenance of envelope integrity under bleach stress, rescuing a wide series of structurally unrelated periplasmic proteins from methionine oxidation. MsrQ provides electrons for reduction to the reductase catalytic subunit MsrP, using the quinone pool of the respiratory chain. The chain is Protein-methionine-sulfoxide reductase heme-binding subunit MsrQ from Xanthomonas campestris pv. campestris (strain 8004).